The primary structure comprises 105 residues: Protamine-2 (105 aa).

Residues 1-74 (MVRYRMRSPS…RRSCRRRRRH (74 aa)) form a disordered region. Phosphoserine occurs at positions 8 and 10. A compositionally biased stretch (basic and acidic residues) spans 33–42 (NPERVEDYGR). Positions 43–74 (THRGHHRHRRCSRKRLHRIHKRRRSCRRRRRH) are enriched in basic residues.

This sequence belongs to the protamine P2 family. Interacts with TDRP. Proteolytic processing into mature chains is required for histone eviction during spermatogenesis. Transition proteins (TNP1 and TNP2) are required for processing. As to expression, testis.

It is found in the nucleus. Its subcellular location is the chromosome. In terms of biological role, protamines substitute for histones in the chromatin of sperm during the haploid phase of spermatogenesis. They compact sperm DNA into a highly condensed, stable and inactive complex. In Rattus tunneyi (Tunney's rat), this protein is Protamine-2 (Prm2).